The following is a 30-amino-acid chain: Ribonuclease pancreatic (30 aa).

A compositionally biased stretch (basic and acidic residues) spans 1-13; it reads KETAAAKFERQHM. A disordered region spans residues 1–21; it reads KETAAAKFERQHMDPAPAAAX. K7 and R10 together coordinate substrate. The active-site Proton acceptor is the H12.

This sequence belongs to the pancreatic ribonuclease family. In terms of assembly, monomer. Interacts with and forms tight 1:1 complexes with RNH1. Dimerization of two such complexes may occur. Interaction with RNH1 inhibits this protein. Pancreas.

Its subcellular location is the secreted. The catalysed reaction is an [RNA] containing cytidine + H2O = an [RNA]-3'-cytidine-3'-phosphate + a 5'-hydroxy-ribonucleotide-3'-[RNA].. The enzyme catalyses an [RNA] containing uridine + H2O = an [RNA]-3'-uridine-3'-phosphate + a 5'-hydroxy-ribonucleotide-3'-[RNA].. Endonuclease that catalyzes the cleavage of RNA on the 3' side of pyrimidine nucleotides. Acts on single-stranded and double-stranded RNA. In Odocoileus virginianus virginianus (Virginia white-tailed deer), this protein is Ribonuclease pancreatic (RNASE1).